Reading from the N-terminus, the 90-residue chain is Probable Fe(2+)-trafficking protein (90 aa).

This sequence belongs to the Fe(2+)-trafficking protein family.

Functionally, could be a mediator in iron transactions between iron acquisition and iron-requiring processes, such as synthesis and/or repair of Fe-S clusters in biosynthetic enzymes. The protein is Probable Fe(2+)-trafficking protein of Delftia acidovorans (strain DSM 14801 / SPH-1).